We begin with the raw amino-acid sequence, 726 residues long: Dipeptidyl-peptidase 5 (726 aa).

The N-terminal stretch at 1 to 19 (MAAAKWLIASLAFASSGLA) is a signal peptide. 2 N-linked (GlcNAc...) asparagine glycosylation sites follow: N96 and N252. The disordered stretch occupies residues 269-291 (AEPINKRNGPRTPQAIEGASSSP). The active-site Charge relay system is S558. The N-linked (GlcNAc...) asparagine glycan is linked to N605. Catalysis depends on charge relay system residues D641 and H673. N699 carries N-linked (GlcNAc...) asparagine glycosylation.

It belongs to the peptidase S9C family.

It is found in the secreted. In terms of biological role, extracellular dipeptidyl-peptidase which removes N-terminal dipeptides sequentially from polypeptides having unsubstituted N-termini. Contributes to pathogenicity. In Trichophyton equinum (Horse ringworm fungus), this protein is Dipeptidyl-peptidase 5 (DPP5).